We begin with the raw amino-acid sequence, 429 residues long: Trehalose-phosphate phosphatase (429 aa).

D181 acts as the Nucleophile in catalysis. 3 residues coordinate Mg(2+): D181, D183, and D368. A substrate-binding site is contributed by 181–183 (DFD).

This sequence belongs to the trehalose phosphatase family. It depends on Mg(2+) as a cofactor.

It catalyses the reaction alpha,alpha-trehalose 6-phosphate + H2O = alpha,alpha-trehalose + phosphate. It participates in glycan biosynthesis; trehalose biosynthesis. Functionally, removes the phosphate from trehalose 6-phosphate to produce free trehalose. In Mycobacterium leprae (strain TN), this protein is Trehalose-phosphate phosphatase (otsB).